Consider the following 137-residue polypeptide: Large ribosomal subunit protein uL16 (137 aa).

A compositionally biased stretch (basic residues) spans 1-17 (MLQPKRTKFRKQQKGRN). Positions 1-24 (MLQPKRTKFRKQQKGRNRGLAQSG) are disordered.

It belongs to the universal ribosomal protein uL16 family. In terms of assembly, part of the 50S ribosomal subunit.

Its function is as follows. Binds 23S rRNA and is also seen to make contacts with the A and possibly P site tRNAs. The chain is Large ribosomal subunit protein uL16 from Dichelobacter nodosus (strain VCS1703A).